The chain runs to 154 residues: Putative pre-16S rRNA nuclease (154 aa).

It belongs to the YqgF nuclease family.

It is found in the cytoplasm. Could be a nuclease involved in processing of the 5'-end of pre-16S rRNA. This chain is Putative pre-16S rRNA nuclease, found in Rickettsia rickettsii (strain Iowa).